We begin with the raw amino-acid sequence, 353 residues long: Putative glycosyltransferase TagX (353 aa).

The protein belongs to the glycosyltransferase 2 family.

In Staphylococcus aureus (strain MSSA476), this protein is Putative glycosyltransferase TagX (tagX).